The following is a 474-amino-acid chain: ATP synthase subunit beta (474 aa).

152 to 159 (GGAGVGKT) is a binding site for ATP.

Belongs to the ATPase alpha/beta chains family. F-type ATPases have 2 components, CF(1) - the catalytic core - and CF(0) - the membrane proton channel. CF(1) has five subunits: alpha(3), beta(3), gamma(1), delta(1), epsilon(1). CF(0) has three main subunits: a(1), b(2) and c(9-12). The alpha and beta chains form an alternating ring which encloses part of the gamma chain. CF(1) is attached to CF(0) by a central stalk formed by the gamma and epsilon chains, while a peripheral stalk is formed by the delta and b chains.

The protein localises to the cell inner membrane. It carries out the reaction ATP + H2O + 4 H(+)(in) = ADP + phosphate + 5 H(+)(out). Its function is as follows. Produces ATP from ADP in the presence of a proton gradient across the membrane. The catalytic sites are hosted primarily by the beta subunits. The chain is ATP synthase subunit beta from Paramagnetospirillum magneticum (strain ATCC 700264 / AMB-1) (Magnetospirillum magneticum).